We begin with the raw amino-acid sequence, 157 residues long: UPF0587 protein C2D10.03c (157 aa).

Zn(2+)-binding residues include cysteine 34, cysteine 37, cysteine 68, and cysteine 71.

It belongs to the UPF0587 family.

In Schizosaccharomyces pombe (strain 972 / ATCC 24843) (Fission yeast), this protein is UPF0587 protein C2D10.03c.